A 162-amino-acid chain; its full sequence is MASAENLYQEKMQELQKQMNKVMQTINNHSKVEAFLNSPFGQYLDQHPFVTLSLLVFISLSAVPVGIFLTLIAGTAIAVCLAVLIIEGIVISVGGIALLCILCGLAVMSLGVAAVLCVSYVAGSSVLNYIHAYRVTVGTRGRSGPISLNHETTTAEKSYRSS.

The Cytoplasmic portion of the chain corresponds to 1-42 (MASAENLYQEKMQELQKQMNKVMQTINNHSKVEAFLNSPFGQ). A helical transmembrane segment spans residues 43 to 63 (YLDQHPFVTLSLLVFISLSAV). The Lumenal portion of the chain corresponds to 64-65 (PV). A helical membrane pass occupies residues 66 to 86 (GIFLTLIAGTAIAVCLAVLII). Residue E87 is a topological domain, cytoplasmic. The helical transmembrane segment at 88–108 (GIVISVGGIALLCILCGLAVM) threads the bilayer. S109 is a topological domain (lumenal). The chain crosses the membrane as a helical span at residues 110-130 (LGVAAVLCVSYVAGSSVLNYI). Over 131 to 162 (HAYRVTVGTRGRSGPISLNHETTTAEKSYRSS) the chain is Cytoplasmic.

This sequence belongs to the LDAF1 family.

The protein resides in the endoplasmic reticulum membrane. It is found in the lipid droplet. Functionally, plays an important role in the formation of lipid droplets (LD) which are storage organelles at the center of lipid and energy homeostasis. This Xenopus laevis (African clawed frog) protein is Lipid droplet assembly factor 1-A.